The following is a 141-amino-acid chain: Cystatin (141 aa).

An N-terminal signal peptide occupies residues 1 to 26 (MVHSQLPVAAPLRLLCALLLLPSATM). Positions 29–129 (GGLSPRSVTD…CHFQVWSRPW (101 aa)) constitute a Cystatin domain. The Secondary area of contact signature appears at 73–77 (QVVAG). 2 disulfides stabilise this stretch: cysteine 91/cysteine 107 and cysteine 120/cysteine 140.

It belongs to the cystatin family. Expressed at a low level by the venom gland (at protein level).

The protein localises to the secreted. Inhibits various C1 cysteine proteases including cathepsin L, papain and cathepsin B. This protein has no toxic activity and its function in the venom is unknown. It may play a role as a housekeeping or regulatory protein. This is Cystatin from Oxyuranus scutellatus scutellatus (Australian taipan).